The following is a 365-amino-acid chain: tRNA 2-selenouridine synthase (365 aa).

Positions 12-136 (FLDDVPMMDM…LRTFLLDTTQ (125 aa)) constitute a Rhodanese domain. The active-site S-selanylcysteine intermediate is Cys95.

Belongs to the SelU family. As to quaternary structure, monomer.

It carries out the reaction 5-methylaminomethyl-2-thiouridine(34) in tRNA + selenophosphate + (2E)-geranyl diphosphate + H2O + H(+) = 5-methylaminomethyl-2-selenouridine(34) in tRNA + (2E)-thiogeraniol + phosphate + diphosphate. It catalyses the reaction 5-methylaminomethyl-2-thiouridine(34) in tRNA + (2E)-geranyl diphosphate = 5-methylaminomethyl-S-(2E)-geranyl-thiouridine(34) in tRNA + diphosphate. The enzyme catalyses 5-methylaminomethyl-S-(2E)-geranyl-thiouridine(34) in tRNA + selenophosphate + H(+) = 5-methylaminomethyl-2-(Se-phospho)selenouridine(34) in tRNA + (2E)-thiogeraniol. The catalysed reaction is 5-methylaminomethyl-2-(Se-phospho)selenouridine(34) in tRNA + H2O = 5-methylaminomethyl-2-selenouridine(34) in tRNA + phosphate. Functionally, involved in the post-transcriptional modification of the uridine at the wobble position (U34) of tRNA(Lys), tRNA(Glu) and tRNA(Gln). Catalyzes the conversion of 2-thiouridine (S2U-RNA) to 2-selenouridine (Se2U-RNA). Acts in a two-step process involving geranylation of 2-thiouridine (S2U) to S-geranyl-2-thiouridine (geS2U) and subsequent selenation of the latter derivative to 2-selenouridine (Se2U) in the tRNA chain. The protein is tRNA 2-selenouridine synthase of Pseudomonas putida (strain W619).